The primary structure comprises 561 residues: DNA mismatch repair protein MutL (561 aa).

This sequence belongs to the DNA mismatch repair MutL/HexB family.

In terms of biological role, this protein is involved in the repair of mismatches in DNA. It is required for dam-dependent methyl-directed DNA mismatch repair. May act as a 'molecular matchmaker', a protein that promotes the formation of a stable complex between two or more DNA-binding proteins in an ATP-dependent manner without itself being part of a final effector complex. The protein is DNA mismatch repair protein MutL of Rippkaea orientalis (strain PCC 8801 / RF-1) (Cyanothece sp. (strain PCC 8801)).